Here is a 335-residue protein sequence, read N- to C-terminus: Phosphatidylglycerol--prolipoprotein diacylglyceryl transferase (335 aa).

The next 3 membrane-spanning stretches (helical) occupy residues 31–51 (IYWY…TYSL), 67–87 (YIFL…LAIG), and 100–120 (LAIQ…FPLI). Residue Arg163 participates in a 1,2-diacyl-sn-glycero-3-phospho-(1'-sn-glycerol) binding. The next 3 helical transmembrane spans lie at 213 to 233 (PLFL…YFGL), 235 to 255 (YIKQ…YGVT), and 277 to 297 (SLLL…APLL).

This sequence belongs to the Lgt family.

Its subcellular location is the cell membrane. The catalysed reaction is L-cysteinyl-[prolipoprotein] + a 1,2-diacyl-sn-glycero-3-phospho-(1'-sn-glycerol) = an S-1,2-diacyl-sn-glyceryl-L-cysteinyl-[prolipoprotein] + sn-glycerol 1-phosphate + H(+). The protein operates within protein modification; lipoprotein biosynthesis (diacylglyceryl transfer). In terms of biological role, catalyzes the transfer of the diacylglyceryl group from phosphatidylglycerol to the sulfhydryl group of the N-terminal cysteine of a prolipoprotein, the first step in the formation of mature lipoproteins. This is Phosphatidylglycerol--prolipoprotein diacylglyceryl transferase from Ureaplasma parvum serovar 3 (strain ATCC 27815 / 27 / NCTC 11736).